A 321-amino-acid chain; its full sequence is Glucokinase (321 aa).

8–13 lines the ATP pocket; the sequence is ADIGGT.

The protein belongs to the bacterial glucokinase family.

The protein localises to the cytoplasm. The enzyme catalyses D-glucose + ATP = D-glucose 6-phosphate + ADP + H(+). This is Glucokinase from Paramagnetospirillum magneticum (strain ATCC 700264 / AMB-1) (Magnetospirillum magneticum).